A 185-amino-acid polypeptide reads, in one-letter code: Ribosome-recycling factor (185 aa).

This sequence belongs to the RRF family.

The protein resides in the cytoplasm. Its function is as follows. Responsible for the release of ribosomes from messenger RNA at the termination of protein biosynthesis. May increase the efficiency of translation by recycling ribosomes from one round of translation to another. This chain is Ribosome-recycling factor, found in Geobacillus thermodenitrificans (strain NG80-2).